We begin with the raw amino-acid sequence, 545 residues long: CTP synthase (545 aa).

The amidoligase domain stretch occupies residues 1-266; that stretch reads MATNYIFVTG…DDIVTKRFNL (266 aa). Residue Ser-14 coordinates CTP. Residue Ser-14 participates in UTP binding. ATP-binding positions include 15–20 and Asp-72; that span reads SLGKGI. Residues Asp-72 and Glu-140 each contribute to the Mg(2+) site. CTP contacts are provided by residues 147–149, 187–192, and Lys-223; these read DIE and KTKPTQ. Residues 187–192 and Lys-223 contribute to the UTP site; that span reads KTKPTQ. 239–241 provides a ligand contact to ATP; sequence RDV. Residues 291–542 form the Glutamine amidotransferase type-1 domain; that stretch reads TVGFVGKYVE…IEAAGEFHKE (252 aa). Gly-352 is an L-glutamine binding site. Cys-379 serves as the catalytic Nucleophile; for glutamine hydrolysis. L-glutamine is bound by residues 380–383, Glu-403, and Arg-470; that span reads LGMQ. Residues His-515 and Glu-517 contribute to the active site.

Belongs to the CTP synthase family. Homotetramer.

The enzyme catalyses UTP + L-glutamine + ATP + H2O = CTP + L-glutamate + ADP + phosphate + 2 H(+). The catalysed reaction is L-glutamine + H2O = L-glutamate + NH4(+). It carries out the reaction UTP + NH4(+) + ATP = CTP + ADP + phosphate + 2 H(+). It functions in the pathway pyrimidine metabolism; CTP biosynthesis via de novo pathway; CTP from UDP: step 2/2. With respect to regulation, allosterically activated by GTP, when glutamine is the substrate; GTP has no effect on the reaction when ammonia is the substrate. The allosteric effector GTP functions by stabilizing the protein conformation that binds the tetrahedral intermediate(s) formed during glutamine hydrolysis. Inhibited by the product CTP, via allosteric rather than competitive inhibition. Its function is as follows. Catalyzes the ATP-dependent amination of UTP to CTP with either L-glutamine or ammonia as the source of nitrogen. Regulates intracellular CTP levels through interactions with the four ribonucleotide triphosphates. The chain is CTP synthase from Idiomarina loihiensis (strain ATCC BAA-735 / DSM 15497 / L2-TR).